The sequence spans 121 residues: UPF0102 protein Syncc9902_1284 (121 aa).

The protein belongs to the UPF0102 family.

The polypeptide is UPF0102 protein Syncc9902_1284 (Synechococcus sp. (strain CC9902)).